Reading from the N-terminus, the 727-residue chain is Glycerol-3-phosphate dehydrogenase, mitochondrial (727 aa).

The transit peptide at 1-42 (MAFQKAVKGTILVGGGALATVLGLSHFAHYKRKQVNLAFVEA) directs the protein to the mitochondrion. 71–99 (DVLVIGGGATGSGCALDAVTRGLKTALVE) serves as a coordination point for FAD. Phosphotyrosine is present on Tyr601. EF-hand domains follow at residues 623 to 658 (SDIDRYKKRFHKFDADQKGFITIVDVQRVLESIGVQ) and 659 to 694 (MDENTLHEILNEVDLNKNGQVELNEFLQLMSAIQKG). Positions 672, 674, 676, 678, and 683 each coordinate Ca(2+).

This sequence belongs to the FAD-dependent glycerol-3-phosphate dehydrogenase family. Requires FAD as cofactor.

The protein localises to the mitochondrion. It carries out the reaction a quinone + sn-glycerol 3-phosphate = dihydroxyacetone phosphate + a quinol. Its pathway is polyol metabolism; glycerol degradation via glycerol kinase pathway; glycerone phosphate from sn-glycerol 3-phosphate (aerobic route): step 1/1. With respect to regulation, calcium-binding enhance the activity of the enzyme. Functionally, calcium-responsive mitochondrial glycerol-3-phosphate dehydrogenase which seems to be a key component of the pancreatic beta-cell glucose-sensing device. The protein is Glycerol-3-phosphate dehydrogenase, mitochondrial (GPD2) of Bos taurus (Bovine).